The chain runs to 253 residues: Tropomyosin-1 (253 aa).

Residues 7-253 (VNKLVRLQGK…MDDVGDDDTQ (247 aa)) are a coiled coil.

It belongs to the tropomyosin family. In terms of assembly, homodimer.

Its function is as follows. Tropomyosin, in association with the troponin complex, plays a central role in the calcium dependent regulation of muscle contraction. The polypeptide is Tropomyosin-1 (TROP1) (Hydra vulgaris (Hydra)).